Here is a 527-residue protein sequence, read N- to C-terminus: Neutrophil cytosol factor 2 (527 aa).

3 TPR repeats span residues 37 to 70 (SRIC…DKHL), 71 to 104 (AVSY…LRGN), and 121 to 154 (CEVL…KSEP). At threonine 233 the chain carries Phosphothreonine. An SH3 1 domain is found at 240–299 (LEGEAHRVLFGFVPETPEELQVMPGNIVFVLKKGNDNWATVMFNGQKGLVPCNYLEPVEL). A disordered region spans residues 304–345 (QQQPQEETSLESDIPAPPSSSAPGRPQLSPGQKGKEEPKQEI). Serine 324 carries the post-translational modification Phosphoserine. Positions 336–345 (KGKEEPKQEI) are enriched in basic and acidic residues. The 79-residue stretch at 352-430 (SYTLKVHYKY…YCLTLWCENT (79 aa)) folds into the PB1 domain. At serine 400 the chain carries Phosphoserine. A disordered region spans residues 434 to 457 (QGFPDEPEESKKSDANNQTTEPEL). The 60-residue stretch at 458–517 (KEGSKVVALFSYEATQPEDLEFLEGDVILVISTVNEQWLEGECKGKVGIFPKAFVEQHPT) folds into the SH3 2 domain.

The protein belongs to the NCF2/NOXA1 family. In terms of assembly, component of the phagocyte NADPH oxidase complex composed of an obligatory core heterodimer formed by the membrane proteins CYBA and CYBB and the cytosolic regulatory subunits NCF1/p47-phox, NCF2/p67-phox, NCF4/p40-phox and the small GTPase RAC1 or RAC2. Part of a cytosolic complex composed at least by NCF1, NCF2 and NCF4. Interacts with NCF4. Interacts (via the C-terminal SH3 domain) with NCF1 (via C-terminus). Interacts with SYTL1 and RAC1. May interact with NOXO1. Interacts with S100A8 and calprotectin (S100A8/9). Interacts with GBP7 (via GB1/RHD3-type G domain). Interacts with CYBB; the interaction is enhanced in the presence of GBP7.

It localises to the cytoplasm. Subunit of the phagocyte NADPH oxidase complex that mediates the transfer of electrons from cytosolic NADPH to O2 to produce the superoxide anion (O2(-)). In the activated complex, electrons are first transferred from NADPH to flavin adenine dinucleotide (FAD) and subsequently transferred via two heme molecules to molecular oxygen, producing superoxide through an outer-sphere reaction. Activation of the NADPH oxidase complex is initiated by the assembly of cytosolic subunits of the NADPH oxidase complex with the core NADPH oxidase complex to form a complex at the plasma membrane or phagosomal membrane. This activation process is initiated by phosphorylation dependent binding of the cytosolic NCF1/p47-phox subunit to the C-terminus of CYBA/p22-phox. In Bos taurus (Bovine), this protein is Neutrophil cytosol factor 2.